A 428-amino-acid polypeptide reads, in one-letter code: CRISPR system endoribonuclease Csm6 (428 aa).

The CARF domain stretch occupies residues 1-145; it reads MKILISAVGT…RANREYTALT (145 aa). Residues 146–428 are HEPN domain; sequence ESEIDALIME…QNKELIKMLE (283 aa).

Belongs to the CRISPR-associated Csm6 family. Homodimer. The composite ssRNase active site is formed at the dimer interface.

With respect to regulation, non-specific ssRNase activity is allosterically activated about 1000-fold by cyclic hexaadenylate (cA6), a second messenger produced by Cas10 of the ternary Csm effector complex in the presence of a cognate target RNA. ssRNase activity is inhibited by physiological concentrations of ATP (1 mM), activity is restored by cOA. Functionally, CRISPR (clustered regularly interspaced short palindromic repeat) is an adaptive immune system that provides protection against mobile genetic elements (viruses, transposable elements and conjugative plasmids). CRISPR clusters contain spacers, sequences complementary to antecedent mobile elements, and target invading nucleic acids. CRISPR clusters are transcribed and processed into CRISPR RNA (crRNA). The type III-A Csm complex binds crRNA and acts as a crRNA-guided RNase, DNase and cyclic oligoadenylate synthase; binding of target RNA cognate to the crRNA is required for all activities. In a heterologous host this Csm effector complex restricts ssRNA phage MS2, suggesting it may target RNA viruses in vivo. This protein is not part of the Csm complex. In terms of biological role, csm functions as a non-specific ssDNase. Base-pairing between crRNA and target RNA to form a ternary Csm complex activates a ssDNase activity; target RNA cleavage suppresses the ssDNase, a temporal control that prevents uncontrolled DNA degradation. Viral RNA transcripts probably tether the Csm complex to the viral genome, recruiting Cas10 ssDNA activity which is able to degrade DNA in the transcription bubble, spatially controlling the DNase activity. Its function is as follows. A single-strand-specific endoribonuclease (ssRNase) that is approximately 1000-fold stimulated by cyclic oligoadenylate (cOA); although several species of cOA are synthesized by this organism only cyclic hexaadenylate (cA6) stimulates the ssRNase activity. Cleaves preferentially within GA or AA dinucleotides, although the presence of cA6 broadens the preference. Linear oligoadenylates do not activate the RNase. The protein is CRISPR system endoribonuclease Csm6 of Streptococcus thermophilus.